The following is a 183-amino-acid chain: Troponin I, fast skeletal muscle (183 aa).

Position 2 is an N-acetylserine (S2). Residues 2–48 (SDEEKKRRAATARRQHLKSAMLQLAVTEIEKEAAAKEVEKQNYLAEH) form an involved in binding TNC region. Positions 97–117 (SQKLFDLRGKFKRPPLRRVRM) are involved in binding TNC and actin.

It belongs to the troponin I family. As to quaternary structure, binds to actin and tropomyosin. The N-terminus is blocked.

In terms of biological role, troponin I is the inhibitory subunit of troponin, the thin filament regulatory complex which confers calcium-sensitivity to striated muscle actomyosin ATPase activity. In Gallus gallus (Chicken), this protein is Troponin I, fast skeletal muscle (TNNI2).